The following is a 390-amino-acid chain: 3,5-dihydroxyphenylacetyl-CoA synthase (390 aa).

Residue Cys-173 is part of the active site.

This sequence belongs to the thiolase-like superfamily. Chalcone/stilbene synthases family.

It catalyses the reaction 4 malonyl-CoA + 4 H(+) = (3,5-dihydroxyphenyl)acetyl-CoA + 4 CO2 + 3 CoA + H2O. The protein operates within antibiotic biosynthesis; vancomycin biosynthesis. Its function is as follows. Involved in the biosynthesis of the nonproteinogenic amino acid monomer (S)-3,5-dihydroxyphenylglycine (Dpg) responsible of the production of vancomycin and teicoplanin antibiotics. Catalyzes the Claisen condensation of four molecules of malonyl-CoA to yield 3,5-dihydroxyphenylacetyl-CoA (DPA-CoA) and three free coenzyme A (CoA). DpgA requires the presence of the dehydratases DpgB and DpgD to facilitate the aromatization of the DPA-S-DgpA or DPA-S-CoA intermediate. This chain is 3,5-dihydroxyphenylacetyl-CoA synthase, found in Streptomyces toyocaensis.